We begin with the raw amino-acid sequence, 633 residues long: Threonine--tRNA ligase (633 aa).

A TGS domain is found at 1–61; that stretch reads MPAIRLPDGS…DHDVDLAIVT (61 aa). The tract at residues 242–533 is catalytic; it reads DHRKLGRQLD…LIEHHAGAMP (292 aa). Zn(2+) contacts are provided by Cys333, His384, and His510.

This sequence belongs to the class-II aminoacyl-tRNA synthetase family. In terms of assembly, homodimer. It depends on Zn(2+) as a cofactor.

The protein resides in the cytoplasm. It carries out the reaction tRNA(Thr) + L-threonine + ATP = L-threonyl-tRNA(Thr) + AMP + diphosphate + H(+). In terms of biological role, catalyzes the attachment of threonine to tRNA(Thr) in a two-step reaction: L-threonine is first activated by ATP to form Thr-AMP and then transferred to the acceptor end of tRNA(Thr). Also edits incorrectly charged L-seryl-tRNA(Thr). The chain is Threonine--tRNA ligase from Laribacter hongkongensis (strain HLHK9).